Consider the following 446-residue polypeptide: Sterile alpha motif domain-containing protein 7 (446 aa).

The segment at 94-168 is required for localization to nuclear polycomb bodies; it reads HTARTEMEMY…NLQGNPMLAA (75 aa). Disordered regions lie at residues 187–207 and 225–277; these read NTGN…QAEE and KDPD…AWDD. Positions 232-249 are enriched in polar residues; sequence PSNQKSSETNEKPTTALA. The SAM domain occupies 327-392; sequence WTVDDVHSFI…SQVSQHVGSM (66 aa).

Monomer, homodimer and homooligomer. Component of a Polycomb group (PcG) multiprotein PRC1-like complex. Interacts with PHC2, NR2E3 and SAMD11. Interacts with RNF1 in a PHC2-dependent manner. In terms of tissue distribution, expressed in the retina (at protein level). Expressed in the retinal inner and outer nuclear layers.

The protein resides in the nucleus. Its subcellular location is the cytoplasm. In terms of biological role, component of a Polycomb group (PcG) multiprotein PRC1-like complex, essential for establishing rod photoreceptor cell identity and function by silencing nonrod gene expression in developing rod photoreceptor cells. Via its association with the PRC1-like complex, promotes epigenetic repressive marks H3K27me3 and H2AK119ub marks in nonrod genes, silencing their transcription. Represses Crx-controlled photoreceptor-specific gene expression. This is Sterile alpha motif domain-containing protein 7 (SAMD7) from Homo sapiens (Human).